The following is a 278-amino-acid chain: NAD kinase (278 aa).

Residue D67 is the Proton acceptor of the active site. NAD(+) contacts are provided by residues 67 to 68 (DG), R72, 137 to 138 (NE), K148, R165, D167, 178 to 183 (TGYAMS), A202, and Q237.

The protein belongs to the NAD kinase family. A divalent metal cation serves as cofactor.

The protein localises to the cytoplasm. It carries out the reaction NAD(+) + ATP = ADP + NADP(+) + H(+). Involved in the regulation of the intracellular balance of NAD and NADP, and is a key enzyme in the biosynthesis of NADP. Catalyzes specifically the phosphorylation on 2'-hydroxyl of the adenosine moiety of NAD to yield NADP. This Thermococcus kodakarensis (strain ATCC BAA-918 / JCM 12380 / KOD1) (Pyrococcus kodakaraensis (strain KOD1)) protein is NAD kinase.